The sequence spans 283 residues: ATP synthase gamma chain (283 aa).

Belongs to the ATPase gamma chain family. F-type ATPases have 2 components, CF(1) - the catalytic core - and CF(0) - the membrane proton channel. CF(1) has five subunits: alpha(3), beta(3), gamma(1), delta(1), epsilon(1). CF(0) has three main subunits: a, b and c.

It localises to the cell inner membrane. In terms of biological role, produces ATP from ADP in the presence of a proton gradient across the membrane. The gamma chain is believed to be important in regulating ATPase activity and the flow of protons through the CF(0) complex. This is ATP synthase gamma chain from Ehrlichia ruminantium (strain Welgevonden).